The following is a 309-amino-acid chain: Homoserine O-succinyltransferase (309 aa).

Cys-142 serves as the catalytic Acyl-thioester intermediate. Positions 163 and 192 each coordinate substrate. Residue His-235 is the Proton acceptor of the active site. Glu-237 is an active-site residue. Arg-249 provides a ligand contact to substrate.

This sequence belongs to the MetA family.

It is found in the cytoplasm. The enzyme catalyses L-homoserine + succinyl-CoA = O-succinyl-L-homoserine + CoA. Its pathway is amino-acid biosynthesis; L-methionine biosynthesis via de novo pathway; O-succinyl-L-homoserine from L-homoserine: step 1/1. Its function is as follows. Transfers a succinyl group from succinyl-CoA to L-homoserine, forming succinyl-L-homoserine. In Erwinia tasmaniensis (strain DSM 17950 / CFBP 7177 / CIP 109463 / NCPPB 4357 / Et1/99), this protein is Homoserine O-succinyltransferase.